The following is a 170-amino-acid chain: Glycine cleavage system H protein, mitochondrial (170 aa).

A mitochondrion-targeting transit peptide spans 1–45 (MSLRVVRSVRAVACSLRIALASCPPRPWAPSAAAVRSLRTGSALL). The Lipoyl-binding domain occupies 63–145 (IGTVGISNFA…YEDGWLIKMT (83 aa)). Lysine 104 bears the N6-lipoyllysine mark.

Belongs to the GcvH family. The glycine cleavage system is composed of four proteins: P (GLDC), T (GCST), L (DLD) and H (GCSH). Interacts with GLDC. The cofactor is (R)-lipoate.

It localises to the mitochondrion. Its function is as follows. The glycine cleavage system catalyzes the degradation of glycine. The H protein (GCSH) shuttles the methylamine group of glycine from the P protein (GLDC) to the T protein (GCST). Has a pivotal role in the lipoylation of enzymes involved in cellular energetics such as the mitochondrial dihydrolipoyllysine-residue acetyltransferase component of pyruvate dehydrogenase complex (DLAT), and the mitochondrial dihydrolipoyllysine-residue succinyltransferase component of 2-oxoglutarate dehydrogenase complex (DLST). The polypeptide is Glycine cleavage system H protein, mitochondrial (Rattus norvegicus (Rat)).